The primary structure comprises 301 residues: Heterogeneous nuclear ribonucleoprotein D-like (301 aa).

2 RRM domains span residues 29–111 (GKMF…KGKE) and 114–193 (KKVF…QPKE). An N6-methyllysine modification is found at lysine 42. A Glycyl lysine isopeptide (Lys-Gly) (interchain with G-Cter in SUMO2) cross-link involves residue lysine 90. Lysine 97 carries the N6-acetyllysine modification. Residue serine 122 is modified to Phosphoserine. Disordered stretches follow at residues 194–229 (VYRQQQQQQKGGRGAAAGGRGGARGRGRGQGQNWNQ) and 279–301 (GQQSTYGKASRGGGNHQNNYQPY). Gly residues predominate over residues 204-223 (GGRGAAAGGRGGARGRGRGQ). Residues 223–301 (QGQNWNQGFN…GNHQNNYQPY (79 aa)) are necessary for interaction with TNPO1. A Dimethylated arginine; alternate modification is found at arginine 289. Arginine 289 is modified (omega-N-methylarginine; alternate).

In terms of assembly, interacts with TNPO1. Interacts with ZNF148. In terms of processing, dimethylation of Arg-289 is probably of the asymmetric type. Expressed in skeletal muscle, myoblast, myotube, heart, brain, liver, kidney, heart, lung, stomach, small intestine, large intestine, spleen, and testis (at protein level). Expressed in brain, skeletal muscle, heart, lung, liver, stomach, small intestine, large intestine, kidney, spleen and testis.

It is found in the nucleus. It localises to the cytoplasm. Its function is as follows. Acts as a transcriptional regulator. Promotes transcription repression. Promotes transcription activation in differentiated myotubes. Binds to double- and single-stranded DNA sequences. Binds to the transcription suppressor CATR sequence of the COX5B promoter. Binds with high affinity to RNA molecules that contain AU-rich elements (AREs) found within the 3'-UTR of many proto-oncogenes and cytokine mRNAs. Binds both to nuclear and cytoplasmic poly(A) mRNAs. Binds to poly(G) and poly(A), but not to poly(U) or poly(C) RNA homopolymers. Binds to the 5'-ACUAGC-3' RNA consensus sequence. This Mus musculus (Mouse) protein is Heterogeneous nuclear ribonucleoprotein D-like (Hnrnpdl).